The following is a 344-amino-acid chain: Mitochondrial mRNA pseudouridine synthase Rpusd3 (344 aa).

The transit peptide at M1 to P36 directs the protein to the mitochondrion. Residues R25–P53 are disordered.

The protein belongs to the pseudouridine synthase RluA family. In terms of assembly, forms a regulatory protein-RNA complex, consisting of RCC1L, NGRN, RPUSD3, RPUSD4, TRUB2, FASTKD2 and 16S mt-rRNA.

The protein resides in the mitochondrion matrix. The catalysed reaction is a uridine in mRNA = a pseudouridine in mRNA. Its function is as follows. Catalyzes uridine to pseudouridine isomerization (pseudouridylation) of specific mitochondrial mRNAs (mt-mRNAs), a post-transcriptional modification necessary for their translation. Acts at position 390 in COXI mt-mRNA and at position 697-699 in mitochondrial COXIII mt-mRNA. As a component of a functional protein-RNA module, consisting of RCC1L, NGRN, RPUSD3, RPUSD4, TRUB2, FASTKD2 and 16S mitochondrial ribosomal RNA (16S mt-rRNA), controls 16S mt-rRNA abundance and may play a role in mitochondrial ribosome biogenesis. This chain is Mitochondrial mRNA pseudouridine synthase Rpusd3 (Rpusd3), found in Mus musculus (Mouse).